Here is a 337-residue protein sequence, read N- to C-terminus: UPF0284 protein AF_0276 (337 aa).

The protein belongs to the UPF0284 family.

This is UPF0284 protein AF_0276 from Archaeoglobus fulgidus (strain ATCC 49558 / DSM 4304 / JCM 9628 / NBRC 100126 / VC-16).